The sequence spans 881 residues: Fanconi anemia core complex-associated protein 100 (881 aa).

Residues glycine 94–aspartate 119 are disordered. Position 667 is a phosphoserine (serine 667).

In terms of assembly, belongs to the multisubunit FA complex composed of FANCA, FANCB, FANCC, FANCE, FANCF, FANCG, FANCL/PHF9, FANCM, FAAP24 and FAAP100. Forms a subcomplex with FANCB and FANCL.

The protein resides in the nucleus. Functionally, plays a role in Fanconi anemia-associated DNA damage response network. Regulates FANCD2 monoubiquitination and the stability of the FA core complex. Induces chromosomal instability as well as hypersensitivity to DNA cross-linking agents, when repressed. This is Fanconi anemia core complex-associated protein 100 from Homo sapiens (Human).